Consider the following 199-residue polypeptide: Recombination protein RecR (199 aa).

A C4-type zinc finger spans residues 57–72; the sequence is CQSCRTYTEETLCPIC. The Toprim domain occupies 81–176; that stretch reads STICVVETPA…MISRIAHGVP (96 aa).

The protein belongs to the RecR family.

In terms of biological role, may play a role in DNA repair. It seems to be involved in an RecBC-independent recombinational process of DNA repair. It may act with RecF and RecO. This is Recombination protein RecR from Shewanella baltica (strain OS155 / ATCC BAA-1091).